Here is a 132-residue protein sequence, read N- to C-terminus: Small heat shock protein hspL (132 aa).

Residues 15–131 (TFTNFVSAPV…VKMSNNNKVE (117 aa)) enclose the sHSP domain.

This sequence belongs to the small heat shock protein (HSP20) family.

This Dictyostelium discoideum (Social amoeba) protein is Small heat shock protein hspL (hspL).